The following is a 483-amino-acid chain: 3-isopropylmalate dehydratase large subunit (483 aa).

3 residues coordinate [4Fe-4S] cluster: Cys352, Cys412, and Cys415.

This sequence belongs to the aconitase/IPM isomerase family. LeuC type 1 subfamily. Heterodimer of LeuC and LeuD. [4Fe-4S] cluster is required as a cofactor.

The enzyme catalyses (2R,3S)-3-isopropylmalate = (2S)-2-isopropylmalate. It functions in the pathway amino-acid biosynthesis; L-leucine biosynthesis; L-leucine from 3-methyl-2-oxobutanoate: step 2/4. Functionally, catalyzes the isomerization between 2-isopropylmalate and 3-isopropylmalate, via the formation of 2-isopropylmaleate. The chain is 3-isopropylmalate dehydratase large subunit from Paenarthrobacter aurescens (strain TC1).